The following is a 120-amino-acid chain: HTH-type transcriptional regulator NmtR (120 aa).

The region spanning 15–109 (LDSQAAAQVA…EAIYHSEHLH (95 aa)) is the HTH arsR-type domain. Positions 49–72 (VTDLAEAIGMEQSAVSHQLRVLRN) form a DNA-binding region, H-T-H motif. Asp-91, His-93, His-104, and His-107 together coordinate Ni(2+).

Homodimer.

Binding to DNA is inhibited by nickel and, to some extent, cobalt ions. Functionally, represses transcription of ctpJ/nmtA, by binding to its promoter region. This chain is HTH-type transcriptional regulator NmtR (nmtR), found in Mycobacterium tuberculosis (strain ATCC 25618 / H37Rv).